The sequence spans 585 residues: Protein-lysine N-methyltransferase EFM1 (585 aa).

Positions 23-281 constitute an SET domain; that stretch reads PKISFRITED…AQDELFNNYG (259 aa). Tyr280 is a binding site for S-adenosyl-L-methionine.

It belongs to the class V-like SAM-binding methyltransferase superfamily. RKM1 family.

It localises to the cytoplasm. S-adenosyl-L-methionine-dependent protein-lysine N-methyltransferase that monomethylates elongation factor 1-alpha (TEF1/TEF2) at 'Lys-30'. In Saccharomyces cerevisiae (strain ATCC 204508 / S288c) (Baker's yeast), this protein is Protein-lysine N-methyltransferase EFM1.